The sequence spans 457 residues: Ribulose bisphosphate carboxylase large chain (457 aa).

A propeptide spanning residues 1 to 2 (MS) is cleaved from the precursor. Residue proline 3 is modified to N-acetylproline. Lysine 14 is modified (N6,N6,N6-trimethyllysine). Substrate contacts are provided by asparagine 123 and threonine 173. The active-site Proton acceptor is lysine 175. Lysine 177 lines the substrate pocket. Mg(2+) contacts are provided by lysine 201, aspartate 203, and glutamate 204. At lysine 201 the chain carries N6-carboxylysine. Histidine 294 serves as the catalytic Proton acceptor. Residues arginine 295, histidine 327, and serine 379 each coordinate substrate.

This sequence belongs to the RuBisCO large chain family. Type I subfamily. As to quaternary structure, heterohexadecamer of 8 large chains and 8 small chains; disulfide-linked. The disulfide link is formed within the large subunit homodimers. Requires Mg(2+) as cofactor. The disulfide bond which can form in the large chain dimeric partners within the hexadecamer appears to be associated with oxidative stress and protein turnover.

It is found in the plastid. The protein localises to the chloroplast. The enzyme catalyses 2 (2R)-3-phosphoglycerate + 2 H(+) = D-ribulose 1,5-bisphosphate + CO2 + H2O. The catalysed reaction is D-ribulose 1,5-bisphosphate + O2 = 2-phosphoglycolate + (2R)-3-phosphoglycerate + 2 H(+). Functionally, ruBisCO catalyzes two reactions: the carboxylation of D-ribulose 1,5-bisphosphate, the primary event in carbon dioxide fixation, as well as the oxidative fragmentation of the pentose substrate in the photorespiration process. Both reactions occur simultaneously and in competition at the same active site. The polypeptide is Ribulose bisphosphate carboxylase large chain (Phelline comosa).